Consider the following 286-residue polypeptide: ATP synthase gamma chain (286 aa).

Belongs to the ATPase gamma chain family. In terms of assembly, F-type ATPases have 2 components, CF(1) - the catalytic core - and CF(0) - the membrane proton channel. CF(1) has five subunits: alpha(3), beta(3), gamma(1), delta(1), epsilon(1). CF(0) has three main subunits: a, b and c.

The protein resides in the cell inner membrane. Functionally, produces ATP from ADP in the presence of a proton gradient across the membrane. The gamma chain is believed to be important in regulating ATPase activity and the flow of protons through the CF(0) complex. The protein is ATP synthase gamma chain of Shewanella sediminis (strain HAW-EB3).